Consider the following 599-residue polypeptide: Probable acetolactate synthase large subunit (599 aa).

A thiamine diphosphate-binding site is contributed by Glu47. Residues Arg149, 258-279, and 301-320 contribute to the FAD site; these read HGTK…IGCR and DIDP…IVGD. The thiamine pyrophosphate binding stretch occupies residues 404–484; sequence QNQMWMAHYF…VVICIFDNRT (81 aa). 2 residues coordinate Mg(2+): Asp455 and Asn482.

Belongs to the TPP enzyme family. In terms of assembly, dimer of large and small chains. Mg(2+) is required as a cofactor. The cofactor is thiamine diphosphate.

The catalysed reaction is 2 pyruvate + H(+) = (2S)-2-acetolactate + CO2. It functions in the pathway amino-acid biosynthesis; L-isoleucine biosynthesis; L-isoleucine from 2-oxobutanoate: step 1/4. The protein operates within amino-acid biosynthesis; L-valine biosynthesis; L-valine from pyruvate: step 1/4. This is Probable acetolactate synthase large subunit (ilvB) from Methanococcus aeolicus.